We begin with the raw amino-acid sequence, 302 residues long: Lysosomal thioesterase PPT2 (302 aa).

The signal sequence occupies residues 1–27; it reads MLGLCGQRLPAAWVLLLLPFLPLLLLA. The N-linked (GlcNAc...) asparagine glycan is linked to Asn60. Cystine bridges form between Cys109–Cys117 and Cys165–Cys176. The active-site Nucleophile is the Ser111. 2 N-linked (GlcNAc...) asparagine glycosylation sites follow: Asn190 and Asn206. Asp228 is a catalytic residue. The N-linked (GlcNAc...) asparagine glycan is linked to Asn245. An intrachain disulfide couples Cys276 to Cys296. The active site involves His283. N-linked (GlcNAc...) asparagine glycosylation is present at Asn289.

Belongs to the palmitoyl-protein thioesterase family. As to expression, broadly expressed, with highest levels in skeletal muscle.

The protein resides in the lysosome. The enzyme catalyses hexadecanoyl-CoA + H2O = hexadecanoate + CoA + H(+). It catalyses the reaction S-hexadecanoyl-N-acetylcysteamine + H2O = N-acetylcysteamine + hexadecanoate + H(+). In terms of biological role, catalyzes the cleavage of thioester bonds from S-palmitoyl-CoA or S-palmitoyl-N-acetylcysteamine (unbranched structures) but does not have activity against palmitoylcysteine or palmitoylated proteins, branched structures or bulky head groups. Conversely, hydrolyzes both long and short chain fatty acyl-CoA substrate. Catalytically inactive due to lack of active site His-283. This chain is Lysosomal thioesterase PPT2, found in Homo sapiens (Human).